Consider the following 536-residue polypeptide: Pre-mRNA-splicing factor SLU7-B (536 aa).

Positions 1 to 42 (MATASVAFKSREDHRKKLELEEARKAGLAPAEVDEDGKEINP) are disordered. Residues 9–25 (KSREDHRKKLELEEARK) show a composition bias toward basic and acidic residues. The segment at 96–109 (CINCGAMTHSSKAC) adopts a CCHC-type zinc-finger fold. Disordered regions lie at residues 176-201 (LKKL…DLDD) and 488-507 (KEDL…YNVN). Residues 187–200 (NGDDATSDGEEDLD) show a composition bias toward acidic residues. Ser193 is modified (phosphoserine). Residues 486 to 493 (LKKEDLSR) carry the Nuclear localization signal motif. The span at 488-501 (KEDLSRREEKDERK) shows a compositional bias: basic and acidic residues.

The protein belongs to the SLU7 family. Interacts with PHYB in photobodies under red light.

It is found in the nucleus. Functionally, participates in the second catalytic step of pre-mRNA splicing, when the free hydroxyl group of exon I attacks the 3'-splice site to generate spliced mRNA and the excised lariat intron. Splicing factor acting as a negative regulator of seedling photomorphogenesis by antagonizing PHYB signaling to promote light-induced hypocotyl elongation. Prevents the accumulation of functionally spliced RVE8a form, a circadian clock regulator mediating the transcriptional activation of clock genes containing evening elements (EE), but promotes PIF4 expression to fine-tune hypocotyl elongation in the light. Together with SMP1, involved in the timing of cell cycle arrest during leaf development, in a STRUWWELPETER (SWP) dependent manner; promotes cell proliferation in developing organs. In Arabidopsis thaliana (Mouse-ear cress), this protein is Pre-mRNA-splicing factor SLU7-B.